A 363-amino-acid chain; its full sequence is UDP-N-acetylglucosamine--N-acetylmuramyl-(pentapeptide) pyrophosphoryl-undecaprenol N-acetylglucosamine transferase (363 aa).

Residues 10–12 (TGG), N124, S195, I250, and Q295 each bind UDP-N-acetyl-alpha-D-glucosamine.

Belongs to the glycosyltransferase 28 family. MurG subfamily.

The protein localises to the cell membrane. The enzyme catalyses di-trans,octa-cis-undecaprenyl diphospho-N-acetyl-alpha-D-muramoyl-L-alanyl-D-glutamyl-meso-2,6-diaminopimeloyl-D-alanyl-D-alanine + UDP-N-acetyl-alpha-D-glucosamine = di-trans,octa-cis-undecaprenyl diphospho-[N-acetyl-alpha-D-glucosaminyl-(1-&gt;4)]-N-acetyl-alpha-D-muramoyl-L-alanyl-D-glutamyl-meso-2,6-diaminopimeloyl-D-alanyl-D-alanine + UDP + H(+). It functions in the pathway cell wall biogenesis; peptidoglycan biosynthesis. Its function is as follows. Cell wall formation. Catalyzes the transfer of a GlcNAc subunit on undecaprenyl-pyrophosphoryl-MurNAc-pentapeptide (lipid intermediate I) to form undecaprenyl-pyrophosphoryl-MurNAc-(pentapeptide)GlcNAc (lipid intermediate II). The polypeptide is UDP-N-acetylglucosamine--N-acetylmuramyl-(pentapeptide) pyrophosphoryl-undecaprenol N-acetylglucosamine transferase (Listeria monocytogenes serotype 4b (strain CLIP80459)).